Consider the following 298-residue polypeptide: Protoheme IX farnesyltransferase (298 aa).

The next 9 helical transmembrane spans lie at 16–36, 45–65, 93–113, 114–134, 141–161, 172–192, 223–243, 244–264, and 277–297; these read VVAL…PDMP, ALGF…NQLL, VFAG…VNVI, TAVL…VYLK, IVIG…AVTG, SLLV…LAIF, VLLA…VFYL, GGAV…LNPP, and IVYL…LPWV.

The protein belongs to the UbiA prenyltransferase family. Protoheme IX farnesyltransferase subfamily.

Its subcellular location is the cell inner membrane. The enzyme catalyses heme b + (2E,6E)-farnesyl diphosphate + H2O = Fe(II)-heme o + diphosphate. It functions in the pathway porphyrin-containing compound metabolism; heme O biosynthesis; heme O from protoheme: step 1/1. Converts heme B (protoheme IX) to heme O by substitution of the vinyl group on carbon 2 of heme B porphyrin ring with a hydroxyethyl farnesyl side group. The protein is Protoheme IX farnesyltransferase of Xanthomonas oryzae pv. oryzae (strain MAFF 311018).